We begin with the raw amino-acid sequence, 166 residues long: uncharacterized protein (166 aa).

The next 4 membrane-spanning stretches (helical) occupy residues 7-27 (VLFK…SLFY), 30-50 (FLFA…YCYI), 69-89 (IETL…KSLL), and 92-112 (NSFF…LVLF).

It to M.jannaschii MJ0795.1 and MJ0785.1.

The protein resides in the cell membrane. This is an uncharacterized protein from Methanocaldococcus jannaschii (strain ATCC 43067 / DSM 2661 / JAL-1 / JCM 10045 / NBRC 100440) (Methanococcus jannaschii).